A 471-amino-acid chain; its full sequence is ATP synthase subunit beta (471 aa).

Residue 154–161 (GGAGVGKT) coordinates ATP.

It belongs to the ATPase alpha/beta chains family. As to quaternary structure, F-type ATPases have 2 components, CF(1) - the catalytic core - and CF(0) - the membrane proton channel. CF(1) has five subunits: alpha(3), beta(3), gamma(1), delta(1), epsilon(1). CF(0) has three main subunits: a(1), b(2) and c(9-12). The alpha and beta chains form an alternating ring which encloses part of the gamma chain. CF(1) is attached to CF(0) by a central stalk formed by the gamma and epsilon chains, while a peripheral stalk is formed by the delta and b chains.

The protein localises to the cell membrane. It carries out the reaction ATP + H2O + 4 H(+)(in) = ADP + phosphate + 5 H(+)(out). Functionally, produces ATP from ADP in the presence of a proton gradient across the membrane. The catalytic sites are hosted primarily by the beta subunits. The chain is ATP synthase subunit beta from Mesomycoplasma hyopneumoniae (strain 7448) (Mycoplasma hyopneumoniae).